Consider the following 359-residue polypeptide: UDP-N-acetylglucosamine--N-acetylmuramyl-(pentapeptide) pyrophosphoryl-undecaprenol N-acetylglucosamine transferase (359 aa).

UDP-N-acetyl-alpha-D-glucosamine is bound by residues 15-17, N127, R166, S191, I245, 264-269, and Q290; these read TGG and ALTVSE.

Belongs to the glycosyltransferase 28 family. MurG subfamily.

Its subcellular location is the cell inner membrane. The catalysed reaction is di-trans,octa-cis-undecaprenyl diphospho-N-acetyl-alpha-D-muramoyl-L-alanyl-D-glutamyl-meso-2,6-diaminopimeloyl-D-alanyl-D-alanine + UDP-N-acetyl-alpha-D-glucosamine = di-trans,octa-cis-undecaprenyl diphospho-[N-acetyl-alpha-D-glucosaminyl-(1-&gt;4)]-N-acetyl-alpha-D-muramoyl-L-alanyl-D-glutamyl-meso-2,6-diaminopimeloyl-D-alanyl-D-alanine + UDP + H(+). It functions in the pathway cell wall biogenesis; peptidoglycan biosynthesis. Functionally, cell wall formation. Catalyzes the transfer of a GlcNAc subunit on undecaprenyl-pyrophosphoryl-MurNAc-pentapeptide (lipid intermediate I) to form undecaprenyl-pyrophosphoryl-MurNAc-(pentapeptide)GlcNAc (lipid intermediate II). This is UDP-N-acetylglucosamine--N-acetylmuramyl-(pentapeptide) pyrophosphoryl-undecaprenol N-acetylglucosamine transferase from Pseudomonas putida (strain GB-1).